Consider the following 316-residue polypeptide: N-acetyl-gamma-glutamyl-phosphate reductase (316 aa).

Cys-136 is an active-site residue.

The protein belongs to the NAGSA dehydrogenase family. Type 1 subfamily.

The protein resides in the cytoplasm. It catalyses the reaction N-acetyl-L-glutamate 5-semialdehyde + phosphate + NADP(+) = N-acetyl-L-glutamyl 5-phosphate + NADPH + H(+). It functions in the pathway amino-acid biosynthesis; L-arginine biosynthesis; N(2)-acetyl-L-ornithine from L-glutamate: step 3/4. In terms of biological role, catalyzes the NADPH-dependent reduction of N-acetyl-5-glutamyl phosphate to yield N-acetyl-L-glutamate 5-semialdehyde. This is N-acetyl-gamma-glutamyl-phosphate reductase from Xanthomonas campestris pv. campestris (strain ATCC 33913 / DSM 3586 / NCPPB 528 / LMG 568 / P 25).